The sequence spans 380 residues: Mitogen-activated protein kinase mpkC (380 aa).

One can recognise a Protein kinase domain in the interval 20 to 300; the sequence is YVNLQPIGMG…AQDALRHPYL (281 aa). Residues 26–34 and lysine 49 each bind ATP; that span reads IGMGSFGLV. Aspartate 141 serves as the catalytic Proton acceptor. Residue threonine 171 is modified to Phosphothreonine. The short motif at 171-173 is the TXY element; sequence TGY. At tyrosine 173 the chain carries Phosphotyrosine.

The protein belongs to the protein kinase superfamily. Ser/Thr protein kinase family. MAP kinase subfamily. HOG1 sub-subfamily. It depends on Mg(2+) as a cofactor. In terms of processing, dually phosphorylated on Thr-171 and Tyr-173, which activates the enzyme.

The catalysed reaction is L-seryl-[protein] + ATP = O-phospho-L-seryl-[protein] + ADP + H(+). The enzyme catalyses L-threonyl-[protein] + ATP = O-phospho-L-threonyl-[protein] + ADP + H(+). With respect to regulation, activated by tyrosine and threonine phosphorylation. Functionally, mitogen-activated protein kinase required for growth on media where sorbitol or mannitol is the sole carbon source. The chain is Mitogen-activated protein kinase mpkC (mpkC) from Aspergillus clavatus (strain ATCC 1007 / CBS 513.65 / DSM 816 / NCTC 3887 / NRRL 1 / QM 1276 / 107).